The chain runs to 185 residues: Homeobox expressed in ES cells 1 (185 aa).

The segment at residues 108–167 (GRRPRTAFTQNQIEVLENVFRVNCYPGIDIREDLAQKLNLEEDRIQIWFQNRRAKLKRSH) is a DNA-binding region (homeobox).

It belongs to the ANF homeobox family. In terms of assembly, can form heterodimers with PROP1 in binding to DNA. Interacts with TLE1.

It localises to the nucleus. Required for the normal development of the forebrain, eyes and other anterior structures such as the olfactory placodes and pituitary gland. Possible transcriptional repressor. Binds to the palindromic PIII sequence, 5'-AGCTTGAGTCTAATTGAATTAACTGTAC-3'. HESX1 and PROP1 bind as heterodimers on this palindromic site, and, in vitro, HESX1 can antagonize PROP1 activation. This Pan paniscus (Pygmy chimpanzee) protein is Homeobox expressed in ES cells 1 (HESX1).